A 296-amino-acid polypeptide reads, in one-letter code: GTP cyclohydrolase FolE2 (296 aa).

Belongs to the GTP cyclohydrolase IV family.

It carries out the reaction GTP + H2O = 7,8-dihydroneopterin 3'-triphosphate + formate + H(+). It participates in cofactor biosynthesis; 7,8-dihydroneopterin triphosphate biosynthesis; 7,8-dihydroneopterin triphosphate from GTP: step 1/1. In terms of biological role, converts GTP to 7,8-dihydroneopterin triphosphate. The polypeptide is GTP cyclohydrolase FolE2 (Delftia acidovorans (strain DSM 14801 / SPH-1)).